The chain runs to 555 residues: Dynein regulatory complex protein 11 (555 aa).

IQ domains are found at residues 154–183 (EDEA…TKRQ) and 199–226 (HEEA…ADKE). Disordered stretches follow at residues 232–255 (MKPK…MRRK), 299–377 (KRNP…EQKI), 450–469 (AAKL…EPFS), and 501–555 (AKKD…SCGA). Basic and acidic residues-rich tracts occupy residues 235 to 244 (KPRDPKRDPQ) and 338 to 367 (GDGK…KGGG). A compositionally biased stretch (basic residues) spans 452 to 464 (KLGKKGKKKKGKK). Residues 501 to 521 (AKKDEKDAAGDGKGKGKDGKG) are compositionally biased toward basic and acidic residues. Over residues 537–546 (KKKKGGKKKS) the composition is skewed to basic residues.

The protein belongs to the AAA ATPase family. DRC11 subfamily. As to quaternary structure, component of the nexin-dynein regulatory complex (N-DRC). Interacts with DRC5.

Its subcellular location is the cytoplasm. The protein resides in the cytoskeleton. It is found in the flagellum axoneme. Its function is as follows. Component of the nexin-dynein regulatory complex (N-DRC), a key regulator of ciliary/flagellar motility which maintains the alignment and integrity of the distal axoneme and regulates microtubule sliding in motile axonemes. In Chlamydomonas reinhardtii (Chlamydomonas smithii), this protein is Dynein regulatory complex protein 11.